Consider the following 87-residue polypeptide: HssA/B-like protein 54 (87 aa).

This sequence belongs to the hssA/B family.

This chain is HssA/B-like protein 54 (hssl54), found in Dictyostelium discoideum (Social amoeba).